The primary structure comprises 876 residues: Alanine--tRNA ligase (876 aa).

The Zn(2+) site is built by histidine 565, histidine 569, cysteine 667, and histidine 671.

It belongs to the class-II aminoacyl-tRNA synthetase family. Zn(2+) serves as cofactor.

Its subcellular location is the cytoplasm. The catalysed reaction is tRNA(Ala) + L-alanine + ATP = L-alanyl-tRNA(Ala) + AMP + diphosphate. In terms of biological role, catalyzes the attachment of alanine to tRNA(Ala) in a two-step reaction: alanine is first activated by ATP to form Ala-AMP and then transferred to the acceptor end of tRNA(Ala). Also edits incorrectly charged Ser-tRNA(Ala) and Gly-tRNA(Ala) via its editing domain. The protein is Alanine--tRNA ligase of Staphylococcus aureus (strain MSSA476).